Here is a 192-residue protein sequence, read N- to C-terminus: 7-methyl-GTP pyrophosphatase (192 aa).

Aspartate 69 (proton acceptor) is an active-site residue.

This sequence belongs to the Maf family. YceF subfamily. The cofactor is a divalent metal cation.

Its subcellular location is the cytoplasm. It catalyses the reaction N(7)-methyl-GTP + H2O = N(7)-methyl-GMP + diphosphate + H(+). Its function is as follows. Nucleoside triphosphate pyrophosphatase that hydrolyzes 7-methyl-GTP (m(7)GTP). May have a dual role in cell division arrest and in preventing the incorporation of modified nucleotides into cellular nucleic acids. The polypeptide is 7-methyl-GTP pyrophosphatase (Pseudomonas syringae pv. syringae (strain B728a)).